We begin with the raw amino-acid sequence, 1508 residues long: DNA-directed RNA polymerase subunit beta' (1508 aa).

Zn(2+)-binding residues include C71, C73, C86, and C89. Mg(2+)-binding residues include D470, D472, and D474. 4 residues coordinate Zn(2+): C804, C878, C885, and C888.

The protein belongs to the RNA polymerase beta' chain family. In terms of assembly, the RNAP catalytic core consists of 2 alpha, 1 beta, 1 beta' and 1 omega subunit. When a sigma factor is associated with the core the holoenzyme is formed, which can initiate transcription. It depends on Mg(2+) as a cofactor. The cofactor is Zn(2+).

It carries out the reaction RNA(n) + a ribonucleoside 5'-triphosphate = RNA(n+1) + diphosphate. Functionally, DNA-dependent RNA polymerase catalyzes the transcription of DNA into RNA using the four ribonucleoside triphosphates as substrates. This chain is DNA-directed RNA polymerase subunit beta', found in Campylobacter fetus subsp. fetus (strain 82-40).